The sequence spans 128 residues: Insulin-like 3 (128 aa).

The first 15 residues, 1–15 (MHALLLLLLLALGSA), serve as a signal peptide directing secretion. 3 disulfide bridges follow: C29–C113, C41–C126, and C112–C117. Residues 81–94 (ALDPDPALDPQLPH) show a composition bias toward low complexity. The disordered stretch occupies residues 81–101 (ALDPDPALDPQLPHQASQRQR).

This sequence belongs to the insulin family. Heterodimer of a B chain and an A chain linked by two disulfide bonds. In terms of tissue distribution, expressed in Leydig cells of the testis, and weakly in the theca interna cells of antral follicles and the corpus luteum of the ovary.

It localises to the secreted. Its function is as follows. Seems to play a role in testicular function. May be a trophic hormone with a role in testicular descent in fetal life. Is a ligand for LGR8 receptor. The chain is Insulin-like 3 (Insl3) from Rattus norvegicus (Rat).